Here is a 258-residue protein sequence, read N- to C-terminus: uncharacterized protein (258 aa).

NADP(+)-binding residues include isoleucine 17, aspartate 53, asparagine 80, arginine 113, tyrosine 145, lysine 149, isoleucine 178, and serine 180. Catalysis depends on tyrosine 145, which acts as the Proton donor. Catalysis depends on lysine 149, which acts as the Lowers pKa of active site Tyr.

This sequence belongs to the short-chain dehydrogenases/reductases (SDR) family.

The protein resides in the cytoplasm. Its subcellular location is the nucleus. This is an uncharacterized protein from Schizosaccharomyces pombe (strain 972 / ATCC 24843) (Fission yeast).